The chain runs to 349 residues: Xylitol-binding protein (349 aa).

The signal sequence occupies residues 1–22; the sequence is MNITSKIGAIAAAGAVGLGLTA. The N-palmitoyl cysteine moiety is linked to residue cysteine 23. The S-diacylglycerol cysteine moiety is linked to residue cysteine 23. The xylitol site is built by tyrosine 42, asparagine 121, arginine 173, asparagine 224, aspartate 249, and glutamine 269.

Belongs to the bacterial solute-binding protein 2 family.

The protein localises to the cell membrane. In terms of biological role, part of an ABC transporter complex likely involved in xylitol import. Binds xylitol. The protein is Xylitol-binding protein of Mycolicibacterium smegmatis (strain ATCC 700084 / mc(2)155) (Mycobacterium smegmatis).